A 590-amino-acid chain; its full sequence is Methionine--tRNA ligase, mitochondrial (590 aa).

A mitochondrion-targeting transit peptide spans methionine 1–alanine 26. The 'HIGH' region motif lies at phenylalanine 51–histidine 61. A 'KMSKS' region motif is present at residues lysine 342–serine 346. ATP is bound at residue lysine 345. The segment at leucine 570–lysine 590 is disordered. A compositionally biased stretch (basic and acidic residues) spans glutamate 571–lysine 590.

This sequence belongs to the class-I aminoacyl-tRNA synthetase family.

The protein resides in the mitochondrion matrix. It catalyses the reaction tRNA(Met) + L-methionine + ATP = L-methionyl-tRNA(Met) + AMP + diphosphate. This chain is Methionine--tRNA ligase, mitochondrial (mars2), found in Takifugu rubripes (Japanese pufferfish).